The chain runs to 281 residues: MRVRKPAVAGYFYPAEKEKLIQQIDWSIKHELGPKALQMPKLGEKALGGVVPHAGYIYSGPVAAWLYSALAGYGKPDAIIIIGPNHYGIGAPVAVMKSGVWETPLGRVEVDGDLAELIMRHYKGVEDDFYAFSKEHSVEVQIPFIQYYFGDVRIVPIVVWRQTLSTSRELGKAVATAIREYGRYVYVLASSDFNHYEPHEVTVQKDDMAISKILKVDEAGLFEVASKFDISICGLGPIGALIVIAKELGFGNVTLLKHATSGDTSGYKDETVGYASILFHR.

It belongs to the MEMO1 family.

The protein is MEMO1 family protein Pars_0062 of Pyrobaculum arsenaticum (strain DSM 13514 / JCM 11321 / PZ6).